Reading from the N-terminus, the 125-residue chain is Small ribosomal subunit protein bS6m (125 aa).

It belongs to the bacterial ribosomal protein bS6 family. As to quaternary structure, component of the mitochondrial ribosome small subunit (28S) which comprises a 12S rRNA and about 30 distinct proteins.

It is found in the mitochondrion. This chain is Small ribosomal subunit protein bS6m (Mrps6), found in Mus musculus (Mouse).